Consider the following 276-residue polypeptide: Pirin-like protein CC_0481 (276 aa).

The protein belongs to the pirin family.

This is Pirin-like protein CC_0481 from Caulobacter vibrioides (strain ATCC 19089 / CIP 103742 / CB 15) (Caulobacter crescentus).